The primary structure comprises 380 residues: Queuine tRNA-ribosyltransferase (380 aa).

Catalysis depends on Asp96, which acts as the Proton acceptor. Substrate-binding positions include 96–100, Asp150, Gln193, and Gly220; that span reads DSGGF. Residues 251-257 are RNA binding; the sequence is GVGAPDS. The active-site Nucleophile is the Asp270. Positions 275–279 are RNA binding; important for wobble base 34 recognition; the sequence is TRIAR. Cys308, Cys310, Cys313, and His339 together coordinate Zn(2+).

It belongs to the queuine tRNA-ribosyltransferase family. Homodimer. Within each dimer, one monomer is responsible for RNA recognition and catalysis, while the other monomer binds to the replacement base PreQ1. It depends on Zn(2+) as a cofactor.

The catalysed reaction is 7-aminomethyl-7-carbaguanine + guanosine(34) in tRNA = 7-aminomethyl-7-carbaguanosine(34) in tRNA + guanine. It participates in tRNA modification; tRNA-queuosine biosynthesis. Its function is as follows. Catalyzes the base-exchange of a guanine (G) residue with the queuine precursor 7-aminomethyl-7-deazaguanine (PreQ1) at position 34 (anticodon wobble position) in tRNAs with GU(N) anticodons (tRNA-Asp, -Asn, -His and -Tyr). Catalysis occurs through a double-displacement mechanism. The nucleophile active site attacks the C1' of nucleotide 34 to detach the guanine base from the RNA, forming a covalent enzyme-RNA intermediate. The proton acceptor active site deprotonates the incoming PreQ1, allowing a nucleophilic attack on the C1' of the ribose to form the product. After dissociation, two additional enzymatic reactions on the tRNA convert PreQ1 to queuine (Q), resulting in the hypermodified nucleoside queuosine (7-(((4,5-cis-dihydroxy-2-cyclopenten-1-yl)amino)methyl)-7-deazaguanosine). This Streptococcus pyogenes serotype M6 (strain ATCC BAA-946 / MGAS10394) protein is Queuine tRNA-ribosyltransferase.